We begin with the raw amino-acid sequence, 326 residues long: Probable iron chelatin transport system permease protein jhp_0822 (326 aa).

A run of 10 helical transmembrane segments spans residues 7–27 (IALA…ESLS), 64–84 (ILAL…QTIL), 91–111 (PFLL…IAVV), 113–133 (SNIA…VLAM), 142–162 (LSLV…AGAI), 164–184 (FFVI…SLSL), 187–207 (YKDC…LFLL), 241–261 (VASA…LVIP), 275–295 (LLLS…VVAK), and 301–321 (DLPV…WLLF).

This sequence belongs to the binding-protein-dependent transport system permease family. FecCD subfamily.

Its subcellular location is the cell inner membrane. In terms of biological role, part of a binding-protein-dependent transport system for an iron chelatin; probably responsible for the translocation of the substrate across the membrane. This is Probable iron chelatin transport system permease protein jhp_0822 from Helicobacter pylori (strain J99 / ATCC 700824) (Campylobacter pylori J99).